Here is a 115-residue protein sequence, read N- to C-terminus: Large ribosomal subunit protein bL20c (115 aa).

It belongs to the bacterial ribosomal protein bL20 family.

Its subcellular location is the plastid. It localises to the chloroplast. In terms of biological role, binds directly to 23S ribosomal RNA and is necessary for the in vitro assembly process of the 50S ribosomal subunit. It is not involved in the protein synthesizing functions of that subunit. The chain is Large ribosomal subunit protein bL20c (rpl20) from Chlorella vulgaris (Green alga).